Reading from the N-terminus, the 371-residue chain is Putative glutamate--cysteine ligase 2 (371 aa).

The protein belongs to the glutamate--cysteine ligase type 2 family. YbdK subfamily.

The enzyme catalyses L-cysteine + L-glutamate + ATP = gamma-L-glutamyl-L-cysteine + ADP + phosphate + H(+). In terms of biological role, ATP-dependent carboxylate-amine ligase which exhibits weak glutamate--cysteine ligase activity. In Cupriavidus pinatubonensis (strain JMP 134 / LMG 1197) (Cupriavidus necator (strain JMP 134)), this protein is Putative glutamate--cysteine ligase 2.